Here is a 462-residue protein sequence, read N- to C-terminus: MLLLARCLLLVLVSSLLVCSGLACGPGRGFGKRRHPKKLTPLAYKQFIPNVAEKTLGASGRYEGKISRNSERFKELTPNYNPDIIFKDEENTGADRLMTQRCKDKLNALAISVMNQWPGVKLRVTEGWDEDGHHSEESLHYEGRAVDITTSDRDRSKYGMLARLAVEAGFDWVYYESKAHIHCSVKAENSVAAKSGGCFPGSATVHLEQGGTKLVKDLSPGDRVLAADDQGRLLYSDFLTFLDRDDGAKKVFYVIETREPRERLLLTAAHLLFVAPHNDSATGEPEASSGSGPPSGGALGPRALFASRVRPGQRVYVVAERDGDRRLLPAAVHSVTLSEEAAGAYAPLTAQGTILINRVLASCYAVIEEHSWAHRAFAPFRLAHALLAALAPARTDRGGDSGGGDRGGGGGRVALTAPGAADAPGAGATAGIHWYSQLLYQIGTWLLDSEALHPLGMAVKSS.

The N-terminal stretch at 1 to 23 (MLLLARCLLLVLVSSLLVCSGLA) is a signal peptide. Residue C24 is the site of N-palmitoyl cysteine attachment. Positions 32 to 38 (KRRHPKK) match the Cardin-Weintraub motif. Ca(2+) contacts are provided by E89, E90, D95, T125, E126, D129, and D131. Zn(2+)-binding residues include H140, D147, and H182. The Cholesterol glycine ester moiety is linked to residue G197. N-linked (GlcNAc...) asparagine glycosylation occurs at N278. Disordered stretches follow at residues 279-302 (DSAT…LGPR) and 395-414 (TDRG…GRVA). Residues 283-292 (GEPEASSGSG) show a composition bias toward low complexity. The segment covering 400–412 (DSGGGDRGGGGGR) has biased composition (gly residues).

This sequence belongs to the hedgehog family. As to quaternary structure, multimer. Interacts with HHATL/GUP1 which negatively regulates HHAT-mediated palmitoylation of the SHH N-terminus. Interacts with BOC and CDON. Interacts with HHIP. Interacts with DISP1 via its cholesterol anchor. Interacts with SCUBE2. Interacts with glypican GPC3. In terms of processing, the C-terminal domain displays an autoproteolysis activity and a cholesterol transferase activity. Both activities result in the cleavage of the full-length protein and covalent attachment of a cholesterol moiety to the C-terminal of the newly generated N-terminal fragment (ShhN). Cholesterylation is required for the sonic hedgehog protein N-product targeting to lipid rafts and multimerization. ShhN is the active species in both local and long-range signaling, whereas the C-product (ShhC) is degraded in the endoplasmic reticulum. N-palmitoylation by HHAT of ShhN is required for sonic hedgehog protein N-product multimerization and full activity. It is a prerequisite for the membrane-proximal positioning and the subsequent shedding of this N-terminal peptide. Post-translationally, the lipidated N- and C-terminal peptides of ShhNp can be cleaved (shedding). The N-terminal palmitoylated peptide is cleaved at the Cardin-Weintraub (CW) motif site. The cleavage reduced the interactions with heparan sulfate. The cleavage is enhanced by SCUBE2.

The protein localises to the endoplasmic reticulum membrane. It is found in the golgi apparatus membrane. It localises to the secreted. The protein resides in the cell membrane. It carries out the reaction glycyl-L-cysteinyl-[protein] + cholesterol + H(+) = [protein]-C-terminal glycyl cholesterol ester + N-terminal L-cysteinyl-[protein]. Its function is as follows. The C-terminal part of the sonic hedgehog protein precursor displays an autoproteolysis and a cholesterol transferase activity. Both activities result in the cleavage of the full-length protein into two parts (ShhN and ShhC) followed by the covalent attachment of a cholesterol moiety to the C-terminal of the newly generated ShhN. Both activities occur in the endoplasmic reticulum. Once cleaved, ShhC is degraded in the endoplasmic reticulum. Functionally, the dually lipidated sonic hedgehog protein N-product (ShhNp) is a morphogen which is essential for a variety of patterning events during development. Induces ventral cell fate in the neural tube and somites. Involved in the patterning of the anterior-posterior axis of the developing limb bud. Essential for axon guidance. Binds to the patched (PTCH1) receptor, which functions in association with smoothened (SMO), to activate the transcription of target genes. In the absence of SHH, PTCH1 represses the constitutive signaling activity of SMO. The polypeptide is Sonic hedgehog protein (Homo sapiens (Human)).